Consider the following 589-residue polypeptide: Ectoderm-neural cortex protein 1 (589 aa).

The 69-residue stretch at 46-114 (TDVLLHAGNR…AYSSRVIINE (69 aa)) folds into the BTB domain. Kelch repeat units follow at residues 296-340 (ALFL…AIGC), 341-388 (KVYI…ELKH), 389-444 (CLYV…SAKL), 446-492 (LFAF…VLGN), 494-538 (IFIM…ASGN), and 539-585 (KLYV…STWK).

In terms of assembly, binds to RB1. Hypophosphorylated RB1 associates with ENC1 during neuronal differentiation, while hyperphosphorylated RB1 associates with ENC1 in undifferentiating cells. Part of a complex that contains CUL3, RBX1 and ENC1. Interacts indirectly with KEAP1. Ubiquitinated by E3 ubiquitin ligase complex formed by CUL3 and RBX1 and probably targeted for proteasome-independent degradation. Quinone-induced oxidative stress increases its ubiquitination. In terms of tissue distribution, primarily expressed in the nervous system.

It is found in the nucleus matrix. It localises to the cytoplasm. The protein localises to the cytoskeleton. Functionally, actin-binding protein involved in the regulation of neuronal process formation and in differentiation of neural crest cells. Down-regulates transcription factor NF2L2/NRF2 by decreasing the rate of protein synthesis and not via a ubiquitin-mediated proteasomal degradation mechanism. The protein is Ectoderm-neural cortex protein 1 (Enc1) of Mus musculus (Mouse).